The primary structure comprises 341 residues: Glycerol-3-phosphate dehydrogenase [NAD(P)+] (341 aa).

Residues Ser15, Trp16, Arg36, and Lys110 each contribute to the NADPH site. Sn-glycerol 3-phosphate is bound by residues Lys110, Gly139, and Ser141. Position 143 (Ala143) interacts with NADPH. Sn-glycerol 3-phosphate contacts are provided by Lys194, Asp247, Ser257, Arg258, and Asn259. Lys194 (proton acceptor) is an active-site residue. Arg258 contributes to the NADPH binding site. Residues Val282 and Glu284 each coordinate NADPH.

The protein belongs to the NAD-dependent glycerol-3-phosphate dehydrogenase family.

It is found in the cytoplasm. It carries out the reaction sn-glycerol 3-phosphate + NAD(+) = dihydroxyacetone phosphate + NADH + H(+). The catalysed reaction is sn-glycerol 3-phosphate + NADP(+) = dihydroxyacetone phosphate + NADPH + H(+). It functions in the pathway membrane lipid metabolism; glycerophospholipid metabolism. Functionally, catalyzes the reduction of the glycolytic intermediate dihydroxyacetone phosphate (DHAP) to sn-glycerol 3-phosphate (G3P), the key precursor for phospholipid synthesis. This chain is Glycerol-3-phosphate dehydrogenase [NAD(P)+], found in Stenotrophomonas maltophilia (strain K279a).